The following is a 132-amino-acid chain: Small ribosomal subunit protein uS8 (132 aa).

It belongs to the universal ribosomal protein uS8 family. Part of the 30S ribosomal subunit. Contacts proteins S5 and S12.

One of the primary rRNA binding proteins, it binds directly to 16S rRNA central domain where it helps coordinate assembly of the platform of the 30S subunit. The polypeptide is Small ribosomal subunit protein uS8 (Saccharopolyspora erythraea (strain ATCC 11635 / DSM 40517 / JCM 4748 / NBRC 13426 / NCIMB 8594 / NRRL 2338)).